We begin with the raw amino-acid sequence, 364 residues long: Histidinol-phosphate aminotransferase (364 aa).

Lys220 bears the N6-(pyridoxal phosphate)lysine mark.

The protein belongs to the class-II pyridoxal-phosphate-dependent aminotransferase family. Histidinol-phosphate aminotransferase subfamily. Homodimer. The cofactor is pyridoxal 5'-phosphate.

The enzyme catalyses L-histidinol phosphate + 2-oxoglutarate = 3-(imidazol-4-yl)-2-oxopropyl phosphate + L-glutamate. The protein operates within amino-acid biosynthesis; L-histidine biosynthesis; L-histidine from 5-phospho-alpha-D-ribose 1-diphosphate: step 7/9. The protein is Histidinol-phosphate aminotransferase of Stenotrophomonas maltophilia (strain R551-3).